Consider the following 1592-residue polypeptide: Laminin subunit gamma-1 (1592 aa).

Residues 1–19 (MRAPVLAVLAVLLLGTVRA) form the signal peptide. The Laminin N-terminal domain occupies 29–268 (SPQRCMPEFV…AISDFAVGGR (240 aa)). N-linked (GlcNAc...) asparagine glycans are attached at residues Asn-43 and Asn-117. Cystine bridges form between Cys-269–Cys-278, Cys-271–Cys-288, Cys-290–Cys-299, Cys-302–Cys-322, Cys-325–Cys-334, Cys-327–Cys-350, Cys-353–Cys-362, Cys-365–Cys-378, Cys-381–Cys-393, Cys-383–Cys-399, Cys-401–Cys-410, Cys-413–Cys-425, Cys-428–Cys-439, Cys-430–Cys-446, Cys-448–Cys-457, and Cys-460–Cys-475. Laminin EGF-like domains are found at residues 269–324 (CKCN…ECLP), 325–380 (CNCN…PCHA), 381–427 (CQCN…GCRP), and 428–477 (CACN…GCTP). Residues 504–672 (SGVEGWTAQQ…AGPSAPWVEI (169 aa)) form the Laminin IV type A domain. Residues Asn-559 and Asn-633 are each glycosylated (N-linked (GlcNAc...) asparagine). Intrachain disulfides connect Cys-707–Cys-716, Cys-709–Cys-723, Cys-725–Cys-734, Cys-737–Cys-753, Cys-756–Cys-764, Cys-758–Cys-775, Cys-778–Cys-787, Cys-790–Cys-808, Cys-811–Cys-825, Cys-813–Cys-832, Cys-835–Cys-844, Cys-847–Cys-864, Cys-867–Cys-881, Cys-869–Cys-888, Cys-890–Cys-899, Cys-902–Cys-915, Cys-918–Cys-930, Cys-920–Cys-937, Cys-939–Cys-948, Cys-951–Cys-963, Cys-966–Cys-978, Cys-968–Cys-984, Cys-986–Cys-995, and Cys-998–Cys-1011. Laminin EGF-like domains follow at residues 707–755 (CTCN…DCQP), 756–810 (CPCP…PCRI), 811–866 (CECS…KCRA), 867–917 (CSCN…GCER), 918–965 (CDCH…GCKP), and 966–1013 (CDCD…GCQE). N-linked (GlcNAc...) asparagine glycosylation is found at Asn-1005, Asn-1041, Asn-1048, Asn-1090, Asn-1144, Asn-1158, Asn-1188, Asn-1206, Asn-1253, Asn-1363, and Asn-1386. Residues 1013–1592 (ECPACYRLVK…CYNTPIIEKP (580 aa)) form a domain II and I region. Positions 1018–1477 (YRLVKDKVNE…DEKMAEMASN (460 aa)) form a coiled coil. Residues 1456 to 1472 (NQLKKKQAEAESDEKMA) show a composition bias toward basic and acidic residues. The tract at residues 1456–1489 (NQLKKKQAEAESDEKMAEMASNATKDAESNANNS) is disordered. A compositionally biased stretch (polar residues) spans 1476–1489 (SNATKDAESNANNS). Residues Asn-1477 and Asn-1487 are each glycosylated (N-linked (GlcNAc...) asparagine). Residues 1515-1579 (VGQLTVLEKT…ANLEDIKNTL (65 aa)) are a coiled coil.

In terms of assembly, laminin is a complex glycoprotein, consisting of three different polypeptide chains (alpha, beta, gamma), which are bound to each other by disulfide bonds into a cross-shaped molecule comprising one long and three short arms with globules at each end.

The protein localises to the secreted. Its subcellular location is the extracellular space. The protein resides in the extracellular matrix. It is found in the basement membrane. Its function is as follows. Binding to cells via a high affinity receptor, laminin is thought to mediate the attachment, migration and organization of cells into tissues during embryonic development by interacting with other extracellular matrix components. The chain is Laminin subunit gamma-1 (lamc1) from Xenopus tropicalis (Western clawed frog).